Consider the following 317-residue polypeptide: UAP56-interacting factor (317 aa).

An N-acetylmethionine modification is found at M1. Residues 1–26 (MNRFGTRLVGATATPPPPPKARSNEN) form a disordered region. Residue T14 is modified to Phosphothreonine. S23 is modified (phosphoserine). Residues 26-44 (NLDKIDMSLDDIIKLNRKE) carry the UAP56-binding motif motif. Phosphoserine is present on residues S60 and S117. Residue K139 forms a Glycyl lysine isopeptide (Lys-Gly) (interchain with G-Cter in SUMO1) linkage. A Glycyl lysine isopeptide (Lys-Gly) (interchain with G-Cter in SUMO2) cross-link involves residue K260.

It belongs to the UIF family. As to quaternary structure, interacts with DDX39B/UAP56 and NXF1; interaction with DDX39B/UAP56 and NXF1 are mutually exclusive. Interacts with SSRP1; required for its recruitment to mRNAs. Interacts with CHTOP.

It is found in the nucleus. The protein localises to the nucleoplasm. Its subcellular location is the nucleus speckle. Functionally, required for mRNA export from the nucleus to the cytoplasm. Acts as an adapter that uses the DDX39B/UAP56-NFX1 pathway to ensure efficient mRNA export and delivering to the nuclear pore. Associates with spliced and unspliced mRNAs simultaneously with ALYREF/THOC4. The protein is UAP56-interacting factor (Fyttd1) of Mus musculus (Mouse).